The sequence spans 38 residues: Cytochrome b6-f complex subunit 5 (38 aa).

A helical membrane pass occupies residues 5–25; sequence LLLGIVLGLIPITLAGLFVAA.

Belongs to the PetG family. As to quaternary structure, the 4 large subunits of the cytochrome b6-f complex are cytochrome b6, subunit IV (17 kDa polypeptide, PetD), cytochrome f and the Rieske protein, while the 4 small subunits are PetG, PetL, PetM and PetN. The complex functions as a dimer.

Its subcellular location is the cellular thylakoid membrane. Component of the cytochrome b6-f complex, which mediates electron transfer between photosystem II (PSII) and photosystem I (PSI), cyclic electron flow around PSI, and state transitions. PetG is required for either the stability or assembly of the cytochrome b6-f complex. In Rippkaea orientalis (strain PCC 8801 / RF-1) (Cyanothece sp. (strain PCC 8801)), this protein is Cytochrome b6-f complex subunit 5.